The primary structure comprises 388 residues: Chorismate synthase (388 aa).

The NADP(+) site is built by Arg-39 and Arg-45. The disordered stretch occupies residues 95-118 (EKNEKSRRVSRPRPGHADLVGGMK). FMN-binding positions include 130–132 (RSS), 251–252 (NA), Gly-296, 311–315 (KPIPT), and Arg-337.

Belongs to the chorismate synthase family. As to quaternary structure, homotetramer. FMNH2 serves as cofactor.

The catalysed reaction is 5-O-(1-carboxyvinyl)-3-phosphoshikimate = chorismate + phosphate. It participates in metabolic intermediate biosynthesis; chorismate biosynthesis; chorismate from D-erythrose 4-phosphate and phosphoenolpyruvate: step 7/7. In terms of biological role, catalyzes the anti-1,4-elimination of the C-3 phosphate and the C-6 proR hydrogen from 5-enolpyruvylshikimate-3-phosphate (EPSP) to yield chorismate, which is the branch point compound that serves as the starting substrate for the three terminal pathways of aromatic amino acid biosynthesis. This reaction introduces a second double bond into the aromatic ring system. The protein is Chorismate synthase of Listeria welshimeri serovar 6b (strain ATCC 35897 / DSM 20650 / CCUG 15529 / CIP 8149 / NCTC 11857 / SLCC 5334 / V8).